A 454-amino-acid polypeptide reads, in one-letter code: uncharacterized protein (454 aa).

Positions 73, 79, 82, and 154 each coordinate [4Fe-4S] cluster. S-adenosyl-L-methionine contacts are provided by Gln279, Phe307, Asp328, and Asp381. The Nucleophile role is filled by Cys408.

This sequence belongs to the class I-like SAM-binding methyltransferase superfamily. RNA M5U methyltransferase family.

This is an uncharacterized protein from Leptospira interrogans serogroup Icterohaemorrhagiae serovar Lai (strain 56601).